The following is a 204-amino-acid chain: Urease accessory protein UreG (204 aa).

13–20 (GPVGSGKT) contributes to the GTP binding site.

This sequence belongs to the SIMIBI class G3E GTPase family. UreG subfamily. As to quaternary structure, homodimer. UreD, UreF and UreG form a complex that acts as a GTP-hydrolysis-dependent molecular chaperone, activating the urease apoprotein by helping to assemble the nickel containing metallocenter of UreC. The UreE protein probably delivers the nickel.

The protein resides in the cytoplasm. Its function is as follows. Facilitates the functional incorporation of the urease nickel metallocenter. This process requires GTP hydrolysis, probably effectuated by UreG. The chain is Urease accessory protein UreG from Acinetobacter baylyi (strain ATCC 33305 / BD413 / ADP1).